The following is a 591-amino-acid chain: PDZ and LIM domain protein 5 (591 aa).

At S2 the chain carries N-acetylserine. S2 carries the phosphoserine modification. In terms of domain architecture, PDZ spans S2–S85. K89 carries the N6-acetyllysine; alternate modification. K89 bears the N6-succinyllysine; alternate mark. K89 is covalently cross-linked (Glycyl lysine isopeptide (Lys-Gly) (interchain with G-Cter in SUMO2); alternate). A phosphoserine mark is found at E102, K105, S111, S134, and S137. Disordered stretches follow at residues T121–V166 and S186–T398. Over residues S134 to I143 the composition is skewed to polar residues. Residues P144–V166 are compositionally biased toward low complexity. Composition is skewed to polar residues over residues S186–N195 and R205–A217. 3 positions are modified to phosphoserine: Q218, S228, and S260. 2 stretches are compositionally biased toward basic and acidic residues: residues D258 to P273 and H294 to K304. Residues Q310 to S339 show a composition bias toward low complexity. Residues S313, P316, and S322 each carry the phosphoserine modification. K350 carries the N6-acetyllysine modification. Positions G353–G385 are enriched in polar residues. 2 positions are modified to phosphoserine: S359 and S361. 3 consecutive LIM zinc-binding domains span residues P413–P472, P472–T531, and T531–F591.

As to quaternary structure, interacts with various PKC isoforms through the LIM domains. Interacts with actin and alpha-actinin through the PDZ domain. Interacts (via LIM domains) with SIPA1L1/SPAR; this interaction may occur preferentially with isoform 1.

It localises to the postsynaptic density. Its subcellular location is the presynapse. The protein localises to the postsynapse. It is found in the cytoplasm. The protein resides in the cytosol. May play an important role in the heart development by scaffolding PKC to the Z-disk region. May play a role in the regulation of cardiomyocyte expansion. Isoforms lacking the LIM domains may negatively modulate the scaffolding activity of isoform 1. Overexpression promotes the development of heart hypertrophy. Contributes to the regulation of dendritic spine morphogenesis in neurons. May be required to restrain postsynaptic growth of excitatory synapses. Isoform 1, but not isoform 2, expression favors spine thinning and elongation. This chain is PDZ and LIM domain protein 5, found in Mus musculus (Mouse).